The chain runs to 431 residues: Homogentisate 1,2-dioxygenase (431 aa).

Catalysis depends on His286, which acts as the Proton acceptor. Fe cation-binding residues include His329 and Glu335. Homogentisate is bound by residues Tyr344 and His365. His365 contacts Fe cation.

It belongs to the homogentisate dioxygenase family. In terms of assembly, hexamer; dimer of trimers. It depends on Fe cation as a cofactor.

The enzyme catalyses homogentisate + O2 = 4-maleylacetoacetate + H(+). The protein operates within amino-acid degradation; L-phenylalanine degradation; acetoacetate and fumarate from L-phenylalanine: step 4/6. Functionally, involved in the catabolism of homogentisate (2,5-dihydroxyphenylacetate or 2,5-OH-PhAc), a central intermediate in the degradation of phenylalanine and tyrosine. Catalyzes the oxidative ring cleavage of the aromatic ring of homogentisate to yield maleylacetoacetate. This chain is Homogentisate 1,2-dioxygenase, found in Pseudomonas fluorescens (strain Pf0-1).